The sequence spans 98 residues: Large ribosomal subunit protein eL21 (98 aa).

This sequence belongs to the eukaryotic ribosomal protein eL21 family.

The chain is Large ribosomal subunit protein eL21 from Korarchaeum cryptofilum (strain OPF8).